The sequence spans 119 residues: uncharacterized protein (119 aa).

Its subcellular location is the mitochondrion. It localises to the nucleus. This is an uncharacterized protein from Schizosaccharomyces pombe (strain 972 / ATCC 24843) (Fission yeast).